A 185-amino-acid chain; its full sequence is 4-hydroxy-tetrahydrodipicolinate reductase (185 aa).

NAD(+)-binding positions include Gly12–Met17 and Glu38. Arg39 contacts NADP(+). Residues Gly102–Thr104 and Ala126–Phe129 each bind NAD(+). The Proton donor/acceptor role is filled by His159. His160 serves as a coordination point for (S)-2,3,4,5-tetrahydrodipicolinate. Catalysis depends on Lys163, which acts as the Proton donor. Gly169–Thr170 is a binding site for (S)-2,3,4,5-tetrahydrodipicolinate.

It belongs to the DapB family. In terms of assembly, homotetramer.

It is found in the cytoplasm. The catalysed reaction is (S)-2,3,4,5-tetrahydrodipicolinate + NAD(+) + H2O = (2S,4S)-4-hydroxy-2,3,4,5-tetrahydrodipicolinate + NADH + H(+). It catalyses the reaction (S)-2,3,4,5-tetrahydrodipicolinate + NADP(+) + H2O = (2S,4S)-4-hydroxy-2,3,4,5-tetrahydrodipicolinate + NADPH + H(+). Its pathway is amino-acid biosynthesis; L-lysine biosynthesis via DAP pathway; (S)-tetrahydrodipicolinate from L-aspartate: step 4/4. In terms of biological role, catalyzes the conversion of 4-hydroxy-tetrahydrodipicolinate (HTPA) to tetrahydrodipicolinate. The protein is 4-hydroxy-tetrahydrodipicolinate reductase (dapB) of Klebsiella pneumoniae.